A 228-amino-acid polypeptide reads, in one-letter code: MANHSQLGFQDASSPIMEELVEFHDHALIVALAICSLVLYLLAHMLMEKLSSNAVDAQEVELIWTILPAIVLVLLALPSLQILYMMDEIDEPDLTLKAIGHQWYWSYEYTDFKDLSFDSYMIPTTDLPNGHFRLLEVDHRVVVPMESPIRVIITAGDVLHSWAVPTLGVKTDAIPGRLNQTSFITTRPGIFYGQCSEICGANHSYMPIVVESTPLPYFEAWSSLLSSS.

At 1-14 (MANHSQLGFQDASS) the chain is on the mitochondrial intermembrane side. The chain crosses the membrane as a helical span at residues 15–45 (PIMEELVEFHDHALIVALAICSLVLYLLAHM). Topologically, residues 46–58 (LMEKLSSNAVDAQ) are mitochondrial matrix. The chain crosses the membrane as a helical span at residues 59 to 86 (EVELIWTILPAIVLVLLALPSLQILYMM). Topologically, residues 87–228 (DEIDEPDLTL…EAWSSLLSSS (142 aa)) are mitochondrial intermembrane. Cu cation-binding residues include H160, C195, E197, C199, H203, and M206. Residue E197 participates in Mg(2+) binding.

Belongs to the cytochrome c oxidase subunit 2 family. As to quaternary structure, component of the cytochrome c oxidase (complex IV, CIV), a multisubunit enzyme composed of 14 subunits. The complex is composed of a catalytic core of 3 subunits MT-CO1, MT-CO2 and MT-CO3, encoded in the mitochondrial DNA, and 11 supernumerary subunits COX4I, COX5A, COX5B, COX6A, COX6B, COX6C, COX7A, COX7B, COX7C, COX8 and NDUFA4, which are encoded in the nuclear genome. The complex exists as a monomer or a dimer and forms supercomplexes (SCs) in the inner mitochondrial membrane with NADH-ubiquinone oxidoreductase (complex I, CI) and ubiquinol-cytochrome c oxidoreductase (cytochrome b-c1 complex, complex III, CIII), resulting in different assemblies (supercomplex SCI(1)III(2)IV(1) and megacomplex MCI(2)III(2)IV(2)). Found in a complex with TMEM177, COA6, COX18, COX20, SCO1 and SCO2. Interacts with TMEM177 in a COX20-dependent manner. Interacts with COX20. Interacts with COX16. Requires Cu cation as cofactor.

It localises to the mitochondrion inner membrane. It catalyses the reaction 4 Fe(II)-[cytochrome c] + O2 + 8 H(+)(in) = 4 Fe(III)-[cytochrome c] + 2 H2O + 4 H(+)(out). Functionally, component of the cytochrome c oxidase, the last enzyme in the mitochondrial electron transport chain which drives oxidative phosphorylation. The respiratory chain contains 3 multisubunit complexes succinate dehydrogenase (complex II, CII), ubiquinol-cytochrome c oxidoreductase (cytochrome b-c1 complex, complex III, CIII) and cytochrome c oxidase (complex IV, CIV), that cooperate to transfer electrons derived from NADH and succinate to molecular oxygen, creating an electrochemical gradient over the inner membrane that drives transmembrane transport and the ATP synthase. Cytochrome c oxidase is the component of the respiratory chain that catalyzes the reduction of oxygen to water. Electrons originating from reduced cytochrome c in the intermembrane space (IMS) are transferred via the dinuclear copper A center (CU(A)) of subunit 2 and heme A of subunit 1 to the active site in subunit 1, a binuclear center (BNC) formed by heme A3 and copper B (CU(B)). The BNC reduces molecular oxygen to 2 water molecules using 4 electrons from cytochrome c in the IMS and 4 protons from the mitochondrial matrix. The sequence is that of Cytochrome c oxidase subunit 2 (MT-CO2) from Anas platyrhynchos (Mallard).